The sequence spans 469 residues: UDP-N-acetylmuramate--L-alanine ligase (469 aa).

Position 112 to 118 (112 to 118) interacts with ATP; that stretch reads GTHGKTT.

The protein belongs to the MurCDEF family.

The protein resides in the cytoplasm. The catalysed reaction is UDP-N-acetyl-alpha-D-muramate + L-alanine + ATP = UDP-N-acetyl-alpha-D-muramoyl-L-alanine + ADP + phosphate + H(+). Its pathway is cell wall biogenesis; peptidoglycan biosynthesis. In terms of biological role, cell wall formation. The polypeptide is UDP-N-acetylmuramate--L-alanine ligase (Leptothrix cholodnii (strain ATCC 51168 / LMG 8142 / SP-6) (Leptothrix discophora (strain SP-6))).